The following is a 33-amino-acid chain: Large ribosomal subunit protein eL21 (33 aa).

It belongs to the eukaryotic ribosomal protein eL21 family. As to quaternary structure, component of the large ribosomal subunit.

It is found in the cytoplasm. The protein resides in the cytosol. It localises to the endoplasmic reticulum. Functionally, component of the large ribosomal subunit. The ribosome is a large ribonucleoprotein complex responsible for the synthesis of proteins in the cell. This is Large ribosomal subunit protein eL21 (rpl21) from Xenopus laevis (African clawed frog).